The sequence spans 369 residues: Peptide chain release factor 2 (369 aa).

Residue Q247 is modified to N5-methylglutamine.

It belongs to the prokaryotic/mitochondrial release factor family. Methylated by PrmC. Methylation increases the termination efficiency of RF2.

The protein resides in the cytoplasm. Its function is as follows. Peptide chain release factor 2 directs the termination of translation in response to the peptide chain termination codons UGA and UAA. The protein is Peptide chain release factor 2 of Phenylobacterium zucineum (strain HLK1).